The following is a 204-amino-acid chain: uncharacterized protein (204 aa).

Over residues 1 to 10 (MQQAITQQEK) the composition is skewed to polar residues. 2 disordered regions span residues 1–20 (MQQA…LPNR) and 70–99 (DEAR…KNTE). The region spanning 131 to 204 (VRDSKKFGLQ…TVTDCVVIGM (74 aa)) is the SPOR domain.

To E.coli FtsN repeat regions.

This is an uncharacterized protein from Haemophilus influenzae (strain ATCC 51907 / DSM 11121 / KW20 / Rd).